Reading from the N-terminus, the 637-residue chain is Transcription factor PHYTOCHROME INTERACTING FACTOR-LIKE 15 (637 aa).

Gly residues predominate over residues 35-46 (FFGGTGGGGGGS). Disordered regions lie at residues 35-54 (FFGG…QERQ), 146-213 (ASLP…EGVM), and 356-397 (ECSA…RRRR). Residues 149-170 (PASNHNGATNNRNAPVATTTTR) are compositionally biased toward polar residues. Positions 384–397 (RTAEVHNLSERRRR) are basic motif. Residues 384–397 (RTAEVHNLSERRRR) are compositionally biased toward basic and acidic residues. A bHLH domain is found at 384-433 (RTAEVHNLSERRRRDRINEKMRALQELIPNCNKIDKASMLDEAIEYLKTL). The helix-loop-helix motif stretch occupies residues 398–433 (DRINEKMRALQELIPNCNKIDKASMLDEAIEYLKTL). The tract at residues 601 to 637 (GDNENFRIPSSAQTKSSQFSDGTGKGTNARERDGAET) is disordered. Positions 608 to 621 (IPSSAQTKSSQFSD) are enriched in polar residues. The segment covering 628-637 (NARERDGAET) has biased composition (basic and acidic residues).

Belongs to the bHLH protein family. In terms of assembly, interacts with LF and PRR1.

The protein localises to the nucleus. Its function is as follows. Transcription factor that may act as negative regulator of phyB-dependent light signal transduction. This is Transcription factor PHYTOCHROME INTERACTING FACTOR-LIKE 15 from Oryza sativa subsp. japonica (Rice).